Reading from the N-terminus, the 390-residue chain is Lipid-A-disaccharide synthase (390 aa).

Belongs to the LpxB family.

The enzyme catalyses a lipid X + a UDP-2-N,3-O-bis[(3R)-3-hydroxyacyl]-alpha-D-glucosamine = a lipid A disaccharide + UDP + H(+). It participates in bacterial outer membrane biogenesis; LPS lipid A biosynthesis. Condensation of UDP-2,3-diacylglucosamine and 2,3-diacylglucosamine-1-phosphate to form lipid A disaccharide, a precursor of lipid A, a phosphorylated glycolipid that anchors the lipopolysaccharide to the outer membrane of the cell. The polypeptide is Lipid-A-disaccharide synthase (Paramagnetospirillum magneticum (strain ATCC 700264 / AMB-1) (Magnetospirillum magneticum)).